We begin with the raw amino-acid sequence, 409 residues long: Tryptophan synthase beta chain (409 aa).

At lysine 98 the chain carries N6-(pyridoxal phosphate)lysine.

Belongs to the TrpB family. As to quaternary structure, tetramer of two alpha and two beta chains. It depends on pyridoxal 5'-phosphate as a cofactor.

The catalysed reaction is (1S,2R)-1-C-(indol-3-yl)glycerol 3-phosphate + L-serine = D-glyceraldehyde 3-phosphate + L-tryptophan + H2O. The protein operates within amino-acid biosynthesis; L-tryptophan biosynthesis; L-tryptophan from chorismate: step 5/5. The beta subunit is responsible for the synthesis of L-tryptophan from indole and L-serine. The protein is Tryptophan synthase beta chain of Jannaschia sp. (strain CCS1).